A 37-amino-acid polypeptide reads, in one-letter code: Large ribosomal subunit protein bL36 (37 aa).

It belongs to the bacterial ribosomal protein bL36 family.

The polypeptide is Large ribosomal subunit protein bL36 (Cutibacterium acnes (strain DSM 16379 / KPA171202) (Propionibacterium acnes)).